Consider the following 678-residue polypeptide: Nucleolar protein 9 (678 aa).

A compositionally biased stretch (basic residues) spans 1–15 (MPRDKQKRGRRAEAK). The disordered stretch occupies residues 1 to 24 (MPRDKQKRGRRAEAKRKRDDVITD). 3 Pumilio repeats span residues 108-143 (EANG…RLFS), 291-334 (GLDN…SLLR), and 382-419 (KILV…SAMD). The interval 477–496 (QRSNQESDGTTSSSNTSSPE) is disordered. Pumilio repeat units lie at residues 524–562 (AVTT…QITS) and 563–600 (RFSG…RFAE).

The protein resides in the nucleus. The protein localises to the nucleolus. In terms of biological role, RNA-binding nucleolar protein required for pre-rRNA processing. Involved in production of 18S rRNA and assembly of small ribosomal subunit. The protein is Nucleolar protein 9 (NOP9) of Paracoccidioides brasiliensis (strain Pb18).